Reading from the N-terminus, the 451-residue chain is Interferon regulatory factor 4 (451 aa).

Residues 21–129 constitute a DNA-binding region (IRF tryptophan pentad repeat); the sequence is NGKLRQWLID…DPYKVYRIVP (109 aa). A phosphoserine; by ROCK2 mark is found at Ser447 and Ser448.

Belongs to the IRF family. Interacts with the BATF-JUNB heterodimer. Interacts with BATF (via bZIP domain); the interaction is direct. Interacts with SPIB. Interacts with DEF6. Directly interacts with NLRP3 in the nucleus of Th2 cells; this interaction enhances IRF4 ability to bind to the IL4 promoter and is required for optimal IRF4-dependent IL4 transcription. Interacts with SPI1. In terms of processing, phosphorylation by ROCK2 regulates IL-17 and IL-21 production. As to expression, lymphoid cells.

Its subcellular location is the nucleus. The protein localises to the cytoplasm. Its function is as follows. Transcriptional activator. Binds to the interferon-stimulated response element (ISRE) of the MHC class I promoter. Binds the immunoglobulin lambda light chain enhancer, together with PU.1. Probably plays a role in ISRE-targeted signal transduction mechanisms specific to lymphoid cells. Involved in CD8(+) dendritic cell differentiation by forming a complex with the BATF-JUNB heterodimer in immune cells, leading to recognition of AICE sequence (5'-TGAnTCA/GAAA-3'), an immune-specific regulatory element, followed by cooperative binding of BATF and IRF4 and activation of genes. This chain is Interferon regulatory factor 4, found in Homo sapiens (Human).